The chain runs to 100 residues: Large ribosomal subunit protein uL23 (100 aa).

This sequence belongs to the universal ribosomal protein uL23 family. In terms of assembly, part of the 50S ribosomal subunit. Contacts protein L29, and trigger factor when it is bound to the ribosome.

In terms of biological role, one of the early assembly proteins it binds 23S rRNA. One of the proteins that surrounds the polypeptide exit tunnel on the outside of the ribosome. Forms the main docking site for trigger factor binding to the ribosome. The protein is Large ribosomal subunit protein uL23 of Mycobacteroides abscessus (strain ATCC 19977 / DSM 44196 / CCUG 20993 / CIP 104536 / JCM 13569 / NCTC 13031 / TMC 1543 / L948) (Mycobacterium abscessus).